A 313-amino-acid polypeptide reads, in one-letter code: Intelectin-1 (313 aa).

The first 18 residues, 1–18, serve as a signal peptide directing secretion; that stretch reads MNQLSFLLFLIATTRGWS. One can recognise a Fibrinogen C-terminal domain in the interval 32 to 255; the sequence is SSSPSLPRSC…AANALCAGMR (224 aa). Residues cysteine 41 and cysteine 70 are joined by a disulfide bond. Residues histidine 86, glutamate 87, aspartate 89, glycine 92, glycine 97, aspartate 98, and aspartate 133 each coordinate Ca(2+). 3 cysteine pairs are disulfide-bonded: cysteine 94–cysteine 280, cysteine 199–cysteine 259, and cysteine 251–cysteine 265. N-linked (GlcNAc...) asparagine glycosylation is present at asparagine 163. Ca(2+) is bound by residues asparagine 260, glutamate 262, glutamate 274, and aspartate 282. Residues 262–263 and glutamate 274 contribute to the a carbohydrate site; that span reads EH. A lipid anchor (GPI-anchor amidated serine) is attached at serine 298. Residues 299–313 constitute a propeptide that is removed on maturation; it reads SSREITEAAVLLFYR.

In terms of assembly, homotrimer; disulfide-linked. May interact with LTF. In terms of processing, N-glycosylated. As to expression, highly expressed in omental adipose tissue where it is found in stromal vascular cells but not in fat cells but is barely detectable in subcutaneous adipose tissue (at protein level). Highly expressed in the small intestine. Also found in the heart, testis, colon, salivary gland, skeletal muscle, pancreas and thyroid and, to a lesser degree, in the uterus, spleen, prostate, lymph node and thymus.

It localises to the cell membrane. It is found in the secreted. Functionally, lectin that specifically recognizes microbial carbohydrate chains in a calcium-dependent manner. Binds to microbial glycans that contain a terminal acyclic 1,2-diol moiety, including beta-linked D-galactofuranose (beta-Galf), D-phosphoglycerol-modified glycans, D-glycero-D-talo-oct-2-ulosonic acid (KO) and 3-deoxy-D-manno-oct-2-ulosonic acid (KDO). Binds to glycans from Gram-positive and Gram-negative bacteria, including K.pneumoniae, S.pneumoniae, Y.pestis, P.mirabilis and P.vulgaris. Does not bind human glycans. Probably plays a role in the defense system against microorganisms. May function as adipokine that has no effect on basal glucose uptake but enhances insulin-stimulated glucose uptake in adipocytes. Increases AKT phosphorylation in the absence and presence of insulin. May interact with lactoferrin/LTF and increase its uptake, and may thereby play a role in iron absorption. This Homo sapiens (Human) protein is Intelectin-1 (ITLN1).